Reading from the N-terminus, the 1138-residue chain is MEGWYLVVLGVCYTLTLAMPKTIYELKMECPHTVGLGQGYIIGSTELGLISIEAASDIKLESSCNFDLHTTSMAQKSFTQVEWRKKSDTTDTTNAASTTFEAQTKTVNLRGTCILAPELYDTLKKVKKTVLCYDLTCNQTHCQPTVYLIAPVLTCMSIRSCMASVFTSRIQVIYEKTHCVTGQLIEGQCFNPAHTLTLSQPAHTYDTVTLPISCFFTPKKSEQLKVIKTFEGILTKTGCTENALQGYYVCFLGSHSEPLIVPSLEDIRSAEVVSRMLVHPRGEDHDAIQNSQSHLRIVGPITAKVPSTSSTDTLKGTAFAGVPMYSSLSTLVRNADPEFVFSPGIVPESNHSTCDKKTVPITWTGYLPISGEMEKVTGCTVFCTLAGPGASCEAYSENGIFNISSPTCLVNKVQRFRGSEQKINFICQRVDQDVVVYCNGQKKVILTKTLVIGQCIYTFTSLFSLMPDVAHSLAVELCVPGLHGWATVMLLSTFCFGWVLIPAVTLIILKCLRVLTFSCSHYTNESKFKFILEKVKIEYQKTMGSMVCDVCHHECETAKELESHRQSCINGQCPYCMTITEATESALQAHYSICKLTGRFQEALKKSLKKPEVKKGCYRTLGVFRYKSRCYVGLVWCLLLTCEIVIWAASAETPLMESGWSDTAHGVGEIPMKTDLELDFSLPSSSSYSYRRKLTNPANKEESIPFHFQMEKQVIHAEIQPLGHWMDATFNIKTAFHCYGACQKYSYPWQTSKCFFEKDYQYETGWGCNPGDCPGVGTGCTACGVYLDKLKSVGKAYKIISLKYTRKVCIQLGTEQTCKHIDANDCLVTPSVKVCIVGTVSKLQPSDTLLFLGPLEQGGIILKQWCTTSCAFGDPGDIMSTPSGMRCPEHTGSFRKICGFATTPVCEYQGNTISGYKRMMATKDSFQSFNLTEPHITTNKLEWIDPDGNTRDHVNLVLNRDVSFQDLSDNPCKVDLHTQAIEGAWGSGVGFTLTCTVGLTECPSFMTSIKACDLAMCYGSTVTNLARGSNTVKVVGKGGHSGSSFKCCHDTDCSSEGLLASAPHLERVTGFNQIDSDKVYDDGAPPCTFKCWFTKSGEWLLGILNGNWIVVVVLVVILILSIIMFSVLCPRRGHKKTV.

Residues 1–18 (MEGWYLVVLGVCYTLTLA) form the signal peptide. Topologically, residues 19 to 487 (MPKTIYELKM…CVPGLHGWAT (469 aa)) are lumenal. 11 cysteine pairs are disulfide-bonded: Cys30-Cys155, Cys64-Cys161, Cys113-Cys132, Cys137-Cys142, Cys179-Cys189, Cys214-Cys250, Cys239-Cys354, Cys379-Cys438, Cys383-Cys392, Cys408-Cys427, and Cys455-Cys478. Asn138 is a glycosylation site (N-linked (GlcNAc...) asparagine; by host). N-linked (GlcNAc...) asparagine; by host glycosylation is present at Asn350. An N-linked (GlcNAc...) asparagine; by host glycan is attached at Asn402. A helical transmembrane segment spans residues 488–508 (VMLLSTFCFGWVLIPAVTLII). Over 509–630 (LKCLRVLTFS…LGVFRYKSRC (122 aa)) the chain is Cytoplasmic. The binding to the ribonucleoprotein stretch occupies residues 519–536 (CSHYTNESKFKFILEKVK). 2 consecutive CCHC-type zinc fingers follow at residues 548 to 568 (CDVC…RQSC) and 573 to 594 (CPYC…YSIC). Binding to the ribonucleoprotein regions lie at residues 591-608 (YSIC…KKSL), 595-606 (KLTGRFQEALKK), and 614-628 (KKGC…RYKS). Residues 610–637 (KPEVKKGCYRTLGVFRYKSRCYVGLVWC) are interaction with host TRAF3. The 24-residue stretch at 614-637 (KKGCYRTLGVFRYKSRCYVGLVWC) folds into the ITAM domain. Phosphotyrosine occurs at positions 618 and 631. The short motif at 618 to 621 (YRTL) is the YxxL element. Residues 631-651 (YVGLVWCLLLTCEIVIWAASA) form a helical membrane-spanning segment. At 652–1107 (ETPLMESGWS…EWLLGILNGN (456 aa)) the chain is on the lumenal side. 8 disulfides stabilise this stretch: Cys738/Cys773, Cys742/Cys780, Cys754/Cys887, Cys768/Cys898, Cys783/Cys906, Cys809/Cys818, Cys826/Cys835, and Cys866/Cys870. The tract at residues 760 to 780 (YQYETGWGCNPGDCPGVGTGC) is fusion loop. A glycan (N-linked (GlcNAc...) asparagine; by host) is linked at Asn930. Cystine bridges form between Cys972/Cys1002, Cys995/Cys1047, Cys1012/Cys1017, Cys1048/Cys1053, and Cys1087/Cys1091. A helical transmembrane segment spans residues 1108-1128 (WIVVVVLVVILILSIIMFSVL). The tract at residues 1124-1138 (MFSVLCPRRGHKKTV) is binding to the ribonucleoprotein. Residues 1129 to 1138 (CPRRGHKKTV) are Cytoplasmic-facing.

The protein belongs to the hantavirus envelope glycoprotein family. Homodimer. Homotetramer; forms heterotetrameric Gn-Gc spikes in the pre-fusion conformation. Interacts (via C-terminus) with the nucleoprotein. Interacts with host TUFM; this interaction contributes to the virus-induced degradation of mitochondria by autophagy, which leads to degradation of host MAVS and inhibition of type I interferon (IFN) responses. Interacts with host MAP1LC3B; this interaction contributes to the virus-induced degradation of mitochondria by autophagy, which leads to degradation of host MAVS and inhibition of type I interferon (IFN) responses. Interacts (via C-terminus) with host TRAF3; this interaction inhibits the formation of TRAF3-TBK1 complexes. In terms of assembly, homodimer. Homotetramer; forms heterotetrameric Gn-Gc spikes in the pre-fusion conformation. Homotrimer; forms homotrimer in the post-fusion conformation at acidic pH. Interacts (via C-terminus) with the nucleoprotein. In terms of processing, envelope polyprotein precursor is quickly cleaved in vivo just after synthesis, presumably by host signal peptidase.

It is found in the virion membrane. Its subcellular location is the host cell surface. The protein localises to the host Golgi apparatus membrane. It localises to the host endoplasmic reticulum membrane. The protein resides in the host mitochondrion. Its function is as follows. Forms homotetramers with glycoprotein C at the surface of the virion. Attaches the virion to host cell receptors including integrin ITGAV/ITGB3. This attachment induces virion internalization possibly through clathrin-dependent endocytosis and dynamin-independent macropinocytosis. Mediates the assembly and budding of infectious virus particles through its interaction with the nucleocapsid protein and the viral genome. May dysregulate normal immune and endothelial cell responses through an ITAM motif. Translocates to mitochondria, binds to host TUFM and recruits MAP1LC3B. These interactions induce mitochondrial autophagy and therefore destruction of host MAVS leading to inhibition of type I interferon (IFN) responses. Concomitant breakdown of glycoprotein N is apparently prevented by the nucleoprotein that may inhibit Gn-stimulated autophagosome-lysosome fusion. Interacts with the viral genomic RNA. Inhibits the host RIG-I/TBK1 pathway by disrupting the formation of TBK1-TRAF3 complexes and downstream signaling responses required for IFN-beta transcription. In terms of biological role, forms homotetramers with glycoprotein N at the surface of the virion. Attaches the virion to host cell receptors including integrin ITGAV/ITGB3. This attachment induces virion internalization predominantly through clathrin-dependent endocytosis. Class II fusion protein that promotes fusion of viral membrane with host endosomal membrane after endocytosis of the virion. The sequence is that of Envelopment polyprotein (GP) from Abrothrix longipilis (Long-haired grass mouse).